Here is an 897-residue protein sequence, read N- to C-terminus: Coiled-coil domain-containing protein lobo (897 aa).

A disordered region spans residues 27–49 (EIDEQRRSQGSESDFADEMEGEF). Acidic residues predominate over residues 40 to 49 (DFADEMEGEF). Coiled-coil stretches lie at residues 269–306 (DLKS…DLEL) and 801–858 (SLLN…QRLT).

Belongs to the DRC7 family. In terms of tissue distribution, testis-specific (at protein level).

Its subcellular location is the cell projection. The protein localises to the cilium. It is found in the flagellum. The protein resides in the cytoplasm. It localises to the cytoskeleton. Its subcellular location is the cilium axoneme. Functionally, key component of the nexin-dynein regulatory complex (N-DRC), essential for N-DRC integrity. Involved in the regulation of flagellar motility. Involved in sperm motility. Required for the sperm to enter in the coiled storage seminal receptacle (SR) tubule. The chain is Coiled-coil domain-containing protein lobo (lobo) from Drosophila melanogaster (Fruit fly).